A 423-amino-acid chain; its full sequence is Transmembrane protease serine 11E (423 aa).

At 1-18 the chain is on the cytoplasmic side; the sequence is MYRSCVVRARKRTCVEPW. Residues 19 to 39 traverse the membrane as a helical; Signal-anchor for type II membrane protein segment; it reads VIGIISFLSLIVLAVCIGLTV. The Extracellular portion of the chain corresponds to 40–423; sequence HYVRYNHRRT…RHWIASNTGI (384 aa). Positions 48–166 constitute an SEA domain; the sequence is RTYNYYSTLS…ESVKIKKINK (119 aa). N-linked (GlcNAc...) asparagine glycosylation is found at Asn-74, Asn-165, Asn-182, and Asn-223. 4 disulfides stabilise this stretch: Cys-176–Cys-297, Cys-217–Cys-233, Cys-342–Cys-358, and Cys-369–Cys-398. Residues 192–422 enclose the Peptidase S1 domain; it reads IVGGTPVEEE…FRHWIASNTG (231 aa). Catalysis depends on charge relay system residues His-232 and Asp-277. Ser-373 (charge relay system) is an active-site residue.

It belongs to the peptidase S1 family. In terms of assembly, forms a heterodimer with SERPINA5 and SERPINE1. N-glycosylated. In terms of tissue distribution, expressed in epidermal, oral and male reproductive tissues.

The protein localises to the cell membrane. It localises to the secreted. Its activity is regulated as follows. Inhibited by SERPINA5. Serine protease which possesses both gelatinolytic and caseinolytic activities. Shows a preference for Arg in the P1 position. The chain is Transmembrane protease serine 11E (Tmprss11e) from Mus musculus (Mouse).